We begin with the raw amino-acid sequence, 151 residues long: uncharacterized protein (151 aa).

Residues 1–24 (MHAKTKKLGTDTSYKRPQVTAQEQ) are disordered.

This is an uncharacterized protein from Acanthamoeba polyphaga mimivirus (APMV).